Reading from the N-terminus, the 557-residue chain is MAIPILDALTSSSGKKNSAEFSIHSTSNPTNPEEPNITSEADNAEDLAALGYKQEFQRGLSLFSVFSVSFSLLGLLPSVATTLPYSIGYTGTPGLLWGWLIAMVFIICIALSMAELCSAMPTSGGLYYAAAVLAPEGWGPLAAWFTGWSNYIAQLVGGPSINYSTAAMLLGAVNIGNPNYEVQNYQLFLVSIAIQFIHFILASMPTKYIAKLNSVGTYLNTLFLFISMIVILAMSSKNHGFNETSKVWSHIENYTDWPDGFAILMSFCGVIWTMSGYDAPFHMSEETANASVNAPRGIILTAAIGGIMGWVMQIVIAYTVVDQTAVVTGSDSMWATYLSQCLPKRAALGILSLTIVSSFLMGQSNLIASSRIAYSYARDGVLPYSEWVATVNPITKTPIRAVFVNFVIGVLILFLAFAGAITIGAVFSVTAIAAFTAFVAPVAMRVFFVKDADFRTGPFNLGKFSKPIGFCSVSFVALMIPILCFPSVKNPTPAEMNWTCLVFGAPMLAVLIWYAISGRKWFKGPRINLASEGDNSTLEGVELYTGSEELPQKKEKE.

A disordered region spans residues 17–38 (NSAEFSIHSTSNPTNPEEPNIT). 9 helical membrane-spanning segments follow: residues 60-80 (LSLF…PSVA), 94-114 (GLLW…LSMA), 214-234 (SVGT…ILAM), 261-281 (FAIL…DAPF), 297-317 (GIIL…IVIA), 348-368 (LGIL…NLIA), 407-427 (VIGV…GAVF), 468-488 (IGFC…FPSV), and 498-518 (WTCL…AISG).

This sequence belongs to the amino acid-polyamine-organocation (APC) superfamily.

Its subcellular location is the membrane. This is an uncharacterized protein from Schizosaccharomyces pombe (strain 972 / ATCC 24843) (Fission yeast).